The chain runs to 525 residues: MSDIHEHKILILDFGSQYTQLIARRIREIGVYCELWAWDVTEAQIREFAPNGIILAGGPESVTADNSPRAPEYVFNAGVPVLGICYGMQTMSEQLGGKVIQGVGEGEFGYAQIEMLAQSALFKDIEDAVSADGKSLLDVWMSHGDKVSAIPEGFVAVAKTDTCPFAAMSCEEKRFYGVQFHPEVTHTRQGMRMLSHFALDICGCAANWKPSSIIEDAIERLKKQVGDDEVILGLSGGVDSSVVAMLLHRAIGKKLTCVFVDNGLLRLNEAKQVMEMFGDHFGLNIVHVDAENRFLDALKGEADPEAKRKIIGRVFVEIFDEEAKKCVNAKWLAQGTIYPDVIESAGSATGKAHVIKSHHNVGGLPDDMELGLVEPLRELFKDEVRKIGLELGLPYNMLYRHPFPGPGLGVRVLGEVKKEYCDLLRRADAIFIEELHKADLYNKVSQAFTVFLPVRSVGVMGDGRKYDWVVSLRAVETIDFMTAHWAHLPYDFLGRVSNRIINEIDGISRVVYDISGKPPATIEWE.

Residues 8 to 207 form the Glutamine amidotransferase type-1 domain; sequence KILILDFGSQ…ALDICGCAAN (200 aa). C85 (nucleophile) is an active-site residue. Active-site residues include H181 and E183. Positions 208–400 constitute a GMPS ATP-PPase domain; sequence WKPSSIIEDA…LGLPYNMLYR (193 aa). 235 to 241 is a binding site for ATP; it reads SGGVDSS.

As to quaternary structure, homodimer.

It catalyses the reaction XMP + L-glutamine + ATP + H2O = GMP + L-glutamate + AMP + diphosphate + 2 H(+). It functions in the pathway purine metabolism; GMP biosynthesis; GMP from XMP (L-Gln route): step 1/1. Catalyzes the synthesis of GMP from XMP. This Shewanella sp. (strain ANA-3) protein is GMP synthase [glutamine-hydrolyzing].